Here is a 222-residue protein sequence, read N- to C-terminus: Charged multivesicular body protein 3 (222 aa).

A lipid anchor (N-myristoyl glycine) is attached at G2. An intramolecular interaction with C-terminus region spans residues 2–113; sequence GLFGKTQEKP…LQKSTEVMKA (112 aa). Positions 22–54 form a coiled coil; that stretch reads KIRKEMRVVDRQIRDIQREEEKVKRSVKDAAKK. 2 important for autoinhibitory function regions span residues 59-64 and 168-169; these read VCIVLA and IL. Positions 141–222 form a coiled coil; it reads EEMLEDTFES…MQSRLATLRS (82 aa). The segment at 151 to 220 is intramolecular interaction with N-terminus; it reads MDDQEEMEEE…EAMQSRLATL (70 aa). Residues 151 to 222 form an interaction with VPS4A region; the sequence is MDDQEEMEEE…MQSRLATLRS (72 aa). A Glycyl lysine isopeptide (Lys-Gly) (interchain with G-Cter in ubiquitin) cross-link involves residue K179. The disordered stretch occupies residues 180 to 222; that stretch reads APSKVTDALPEPEPPGAMAASEDEEEEEEALEAMQSRLATLRS. S200 carries the post-translational modification Phosphoserine. Acidic residues predominate over residues 200–210; the sequence is SEDEEEEEEAL. Residues 201-211 carry the MIT-interacting motif motif; the sequence is EDEEEEEEALE. Interaction with STAMBP stretches follow at residues 203-207 and 221-222; these read EEEEE and RS.

It belongs to the SNF7 family. As to quaternary structure, probable core component of the endosomal sorting required for transport complex III (ESCRT-III). ESCRT-III components are thought to multimerize to form a flat lattice on the perimeter membrane of the endosome. Several assembly forms of ESCRT-III may exist that interact and act sequentially. Forms a metastable monomer in solution; its core structure (without part of the putative autoinhibitory C-terminal acidic region) oligomerizes into a flat lattice via two different dimerization interfaces. In vitro, heteromerizes with CHMP2A (but not CHMP4) to form helical tubular structures that expose membrane-interacting sites on the outside whereas VPS4B can associate on the inside of the tubule. May interact with IGFBP7; the relevance of such interaction however remains unclear. Interacts with CHMP2A. Interacts with CHMP4A; the interaction requires the release of CHMP4A autoinhibition. Interacts with VPS4A. Interacts with STAMBP; the interaction appears to relieve the autoinhibition of CHMP3. Interacts with VTA1. Widely expressed. Expressed in heart, brain, placenta, lung, liver, skeletal muscle, kidney and pancreas.

It localises to the cytoplasm. The protein localises to the cytosol. It is found in the membrane. Its subcellular location is the endosome. The protein resides in the late endosome membrane. Probable core component of the endosomal sorting required for transport complex III (ESCRT-III) which is involved in multivesicular bodies (MVBs) formation and sorting of endosomal cargo proteins into MVBs. MVBs contain intraluminal vesicles (ILVs) that are generated by invagination and scission from the limiting membrane of the endosome and mostly are delivered to lysosomes enabling degradation of membrane proteins, such as stimulated growth factor receptors, lysosomal enzymes and lipids. The MVB pathway appears to require the sequential function of ESCRT-O, -I,-II and -III complexes. ESCRT-III proteins mostly dissociate from the invaginating membrane before the ILV is released. The ESCRT machinery also functions in topologically equivalent membrane fission events, such as the terminal stages of cytokinesis and the budding of enveloped viruses (HIV-1 and other lentiviruses). ESCRT-III proteins are believed to mediate the necessary vesicle extrusion and/or membrane fission activities, possibly in conjunction with the AAA ATPase VPS4. Selectively binds to phosphatidylinositol 3,5-bisphosphate PtdIns(3,5)P2 and PtdIns(3,4)P2 in preference to other phosphoinositides tested. Involved in late stages of cytokinesis. Plays a role in endosomal sorting/trafficking of EGF receptor. Isoform 2 prevents stress-mediated cell death and accumulation of reactive oxygen species when expressed in yeast cells. The sequence is that of Charged multivesicular body protein 3 (CHMP3) from Homo sapiens (Human).